Here is a 218-residue protein sequence, read N- to C-terminus: tRNA (guanine-N(7)-)-methyltransferase (218 aa).

S-adenosyl-L-methionine is bound by residues glutamate 43, aspartate 68, glutamate 101, and asparagine 124. Substrate-binding residues include lysine 128 and aspartate 160.

It belongs to the class I-like SAM-binding methyltransferase superfamily. TrmB family.

It catalyses the reaction guanosine(46) in tRNA + S-adenosyl-L-methionine = N(7)-methylguanosine(46) in tRNA + S-adenosyl-L-homocysteine. It participates in tRNA modification; N(7)-methylguanine-tRNA biosynthesis. Catalyzes the formation of N(7)-methylguanine at position 46 (m7G46) in tRNA. The sequence is that of tRNA (guanine-N(7)-)-methyltransferase from Acetivibrio thermocellus (strain ATCC 27405 / DSM 1237 / JCM 9322 / NBRC 103400 / NCIMB 10682 / NRRL B-4536 / VPI 7372) (Clostridium thermocellum).